The following is a 342-amino-acid chain: Methionine import ATP-binding protein MetN (342 aa).

The ABC transporter domain occupies 2–241 (ITLEQVTKIY…PQQPITKRFV (240 aa)). Position 38–45 (38–45 (GYSGAGKS)) interacts with ATP.

It belongs to the ABC transporter superfamily. Methionine importer (TC 3.A.1.24) family. In terms of assembly, the complex is composed of two ATP-binding proteins (MetN), two transmembrane proteins (MetI) and a solute-binding protein (MetQ).

Its subcellular location is the cell membrane. It carries out the reaction L-methionine(out) + ATP + H2O = L-methionine(in) + ADP + phosphate + H(+). The catalysed reaction is D-methionine(out) + ATP + H2O = D-methionine(in) + ADP + phosphate + H(+). Functionally, part of the ABC transporter complex MetNIQ involved in methionine import. Responsible for energy coupling to the transport system. The sequence is that of Methionine import ATP-binding protein MetN from Geobacillus kaustophilus (strain HTA426).